A 210-amino-acid polypeptide reads, in one-letter code: 23.5 kDa heat shock protein, mitochondrial (210 aa).

The transit peptide at 1 to 20 (MASSSALALRRLLSSSTVAV) directs the protein to the mitochondrion. The 109-residue stretch at 102–210 (MGASGVRRGW…RNNIRHINVD (109 aa)) folds into the sHSP domain.

The protein belongs to the small heat shock protein (HSP20) family. As to quaternary structure, may form oligomeric structures.

It is found in the mitochondrion. This chain is 23.5 kDa heat shock protein, mitochondrial (HSP23.5), found in Arabidopsis thaliana (Mouse-ear cress).